The primary structure comprises 495 residues: 3-octaprenyl-4-hydroxybenzoate carboxy-lyase (495 aa).

N172 serves as a coordination point for Mn(2+). Prenylated FMN-binding positions include 175–177 (IYR), 189–191 (RWL), and 194–195 (RG). Residue E238 coordinates Mn(2+). The active-site Proton donor is the D287.

Belongs to the UbiD family. In terms of assembly, homohexamer. Prenylated FMN serves as cofactor. It depends on Mn(2+) as a cofactor.

It is found in the cell membrane. It catalyses the reaction a 4-hydroxy-3-(all-trans-polyprenyl)benzoate + H(+) = a 2-(all-trans-polyprenyl)phenol + CO2. It participates in cofactor biosynthesis; ubiquinone biosynthesis. In terms of biological role, catalyzes the decarboxylation of 3-octaprenyl-4-hydroxy benzoate to 2-octaprenylphenol, an intermediate step in ubiquinone biosynthesis. This Marinobacter nauticus (strain ATCC 700491 / DSM 11845 / VT8) (Marinobacter aquaeolei) protein is 3-octaprenyl-4-hydroxybenzoate carboxy-lyase.